A 358-amino-acid polypeptide reads, in one-letter code: Ion-translocating oxidoreductase complex subunit D (358 aa).

Helical transmembrane passes span 19-39 (IMLWVILAMMPAFFTQIYYFG), 41-61 (GVVLQSALAIGTAIIAEFIAI), 79-99 (LTALILAMAIPPYAPYWIIII), and 125-145 (IGYVILLISFPLQMTTWMPPI). Thr-186 is subject to FMN phosphoryl threonine. Helical transmembrane passes span 220–240 (FAQGWWQINVAFLAGGIFLIL), 248–268 (IPVAMLVTFFCLATATAFTGF), 271–291 (LSAISQLVSGAMMFGAFFIAT), 297–317 (SITPRGKIIFGALVGLFVYLI), and 321–341 (GNYPDGVAFAILLSNICVPLI).

This sequence belongs to the NqrB/RnfD family. The complex is composed of six subunits: RnfA, RnfB, RnfC, RnfD, RnfE and RnfG. FMN serves as cofactor.

Its subcellular location is the cell inner membrane. Functionally, part of a membrane-bound complex that couples electron transfer with translocation of ions across the membrane. The protein is Ion-translocating oxidoreductase complex subunit D of Haemophilus influenzae (strain 86-028NP).